An 886-amino-acid polypeptide reads, in one-letter code: Valine--tRNA ligase (886 aa).

Residues 53 to 63 carry the 'HIGH' region motif; sequence PNVTGSLHMGH. Positions 540–544 match the 'KMSKS' region motif; it reads KMSKS. Position 543 (lysine 543) interacts with ATP. Residues 819–851 adopt a coiled-coil conformation; that stretch reads TIDVAAERRRLEKELAGAQKELASTAAKLANAD.

The protein belongs to the class-I aminoacyl-tRNA synthetase family. ValS type 1 subfamily. Monomer.

It is found in the cytoplasm. The catalysed reaction is tRNA(Val) + L-valine + ATP = L-valyl-tRNA(Val) + AMP + diphosphate. Functionally, catalyzes the attachment of valine to tRNA(Val). As ValRS can inadvertently accommodate and process structurally similar amino acids such as threonine, to avoid such errors, it has a 'posttransfer' editing activity that hydrolyzes mischarged Thr-tRNA(Val) in a tRNA-dependent manner. The sequence is that of Valine--tRNA ligase from Mycobacterium tuberculosis (strain CDC 1551 / Oshkosh).